Here is a 447-residue protein sequence, read N- to C-terminus: tRNA(Ile)-lysidine synthase (447 aa).

ATP is bound at residue 31-36; the sequence is SGGMDS.

It belongs to the tRNA(Ile)-lysidine synthase family.

The protein resides in the cytoplasm. The enzyme catalyses cytidine(34) in tRNA(Ile2) + L-lysine + ATP = lysidine(34) in tRNA(Ile2) + AMP + diphosphate + H(+). Ligates lysine onto the cytidine present at position 34 of the AUA codon-specific tRNA(Ile) that contains the anticodon CAU, in an ATP-dependent manner. Cytidine is converted to lysidine, thus changing the amino acid specificity of the tRNA from methionine to isoleucine. The polypeptide is tRNA(Ile)-lysidine synthase (Pseudothermotoga lettingae (strain ATCC BAA-301 / DSM 14385 / NBRC 107922 / TMO) (Thermotoga lettingae)).